An 82-amino-acid polypeptide reads, in one-letter code: Small ribosomal subunit protein bS16 (82 aa).

Belongs to the bacterial ribosomal protein bS16 family.

This Psychromonas ingrahamii (strain DSM 17664 / CCUG 51855 / 37) protein is Small ribosomal subunit protein bS16.